Consider the following 1161-residue polypeptide: Cell wall protein DAN4 (1161 aa).

The first 19 residues, 1–19 (MVNISIVAGIVALATSAAA), serve as a signal peptide directing secretion. Disordered regions lie at residues 123-309 (TSTS…SASS), 326-345 (TPAT…STTN), 354-547 (TTTS…SSFG), and 691-713 (STDS…SSTA). The tract at residues 134-286 (TSTTPTTTIT…TTSTTSTTST (153 aa)) is 46 X 3 AA tandem repeats of T-[SP]-T. Positions 354 to 372 (TTTSDTYISSSSPSQVTSS) are enriched in low complexity. 14 tandem repeats follow at residues 373–384 (AEPTTVSEVTSS), 385–396 (VEPTRSSQVTSS), 397–408 (AEPTTVSEFTSS), 409–420 (VEPTRSSQVTSS), 421–432 (AEPTTVSEFTSS), 433–444 (VEPTRSSQVTSS), 445–456 (AEPTTVSEFTSS), 457–468 (VEPTRSSQVTSS), 469–480 (AEPTTVSEFTSS), 481–492 (VEPTRSSQVTSS), 493–504 (AEPTTVSEFTSS), 505–516 (VEPIRSSQVTSS), 517–528 (AEPTTVSEVTSS), and 529–540 (VEPIRSSQVTTT). Residues 373-540 (AEPTTVSEVT…PIRSSQVTTT (168 aa)) form a 14 X 12 AA approximate tandem repeats region. Residues 373–547 (AEPTTVSEVT…TTTEPVSSFG (175 aa)) show a composition bias toward polar residues. 2 tandem repeats follow at residues 826–913 (EDSV…EDNE) and 914–1001 (EDIT…EDNE). Positions 826-1040 (EDSVLTKTQV…SPVSSFNSKA (215 aa)) are 2.5 X 88 AA approximate tandem repeats. The 2-3; truncated repeat unit spans residues 1002–1040 (EDVASTKTELLTMETTITSCSGGICTTLMSPVSSFNSKA). Residue Asn1137 is the site of GPI-anchor amidated asparagine attachment. Residues 1138–1161 (GAYNFDKDNIFGTAIVAVVALLLL) constitute a propeptide, removed in mature form.

It belongs to the SRP1/TIP1 family. In terms of processing, extensively O-glycosylated. Post-translationally, the GPI-anchor is attached to the protein in the endoplasmic reticulum and serves to target the protein to the cell surface. There, the glucosamine-inositol phospholipid moiety is cleaved off and the GPI-modified mannoprotein is covalently attached via its lipidless GPI glycan remnant to the 1,6-beta-glucan of the outer cell wall layer.

It localises to the secreted. Its subcellular location is the cell wall. It is found in the cell membrane. Component of the cell wall. The protein is Cell wall protein DAN4 of Saccharomyces cerevisiae (strain ATCC 204508 / S288c) (Baker's yeast).